The following is a 313-amino-acid chain: Olfactory receptor 4E2 (313 aa).

The Extracellular segment spans residues 1 to 25 (MDSLNQTRVTEFVFLGLTDNRVLEM). N5 carries N-linked (GlcNAc...) asparagine glycosylation. Residues 26 to 49 (LFFMAFSAIYMLTLSGNILIIIAT) form a helical membrane-spanning segment. Over 50-57 (VFTPSLHT) the chain is Cytoplasmic. The chain crosses the membrane as a helical span at residues 58-79 (PMYFFLSNLSFIDICHSSVTVP). Over 80-100 (KMLEGLLLERKTISFDNCITQ) the chain is Extracellular. An intrachain disulfide couples C97 to C179. The chain crosses the membrane as a helical span at residues 101–120 (LFFLHLFACAEIFLLIIVAY). Positions 105 and 109 each coordinate Cu cation. Topologically, residues 121–139 (DRYVAICTPLHYPNVMNMR) are cytoplasmic. The helical transmembrane segment at 140 to 158 (VCIQLVFALWLGGTVHSLG) threads the bilayer. Residues 159–195 (QTFLTIRLPYCGPNIIDSYFCDVPLVIKLACTDTYLT) are Extracellular-facing. The chain crosses the membrane as a helical span at residues 196–219 (GILIVTNSGTISLSCFLAVVTSYM). At 220–235 (VILVSLRKHSAEGRQK) the chain is on the cytoplasmic side. A helical membrane pass occupies residues 236-258 (ALSTCSAHFMVVALFFGPCIFIY). At 259–269 (TRPDTSFSIDK) the chain is on the extracellular side. Residue R260 participates in Cu cation binding. Residues 270–289 (VVSVFYTVVTPLLNPFIYTL) form a helical membrane-spanning segment. At 290 to 313 (RNEEVKSAMKQLRQRQVFFTKSYT) the chain is on the cytoplasmic side.

It belongs to the G-protein coupled receptor 1 family.

The protein resides in the cell membrane. Its activity is regulated as follows. Copper binding enhances receptor activity in response to odorant binding. Olfactory receptor that is activated by the binding of organosulfur odorants with thioether groups such as (methylthio)methanethiol (MTMT) and bis(methylthiomethyl) disulfide. Also binds odorants cis-cyclooctene and tert-butyl mercaptan. The activity of this receptor is mediated by G proteins which activate adenylyl cyclase. This chain is Olfactory receptor 4E2, found in Homo sapiens (Human).